The sequence spans 139 residues: Arsenate reductase (139 aa).

Active-site nucleophile residues include cysteine 10, cysteine 82, and cysteine 89. Cystine bridges form between cysteine 10-cysteine 82 and cysteine 82-cysteine 89.

Belongs to the low molecular weight phosphotyrosine protein phosphatase family. Thioredoxin-coupled ArsC subfamily.

Its subcellular location is the cytoplasm. It catalyses the reaction arsenate + [thioredoxin]-dithiol + H(+) = arsenite + [thioredoxin]-disulfide + H2O. Its function is as follows. Catalyzes the reduction of arsenate [As(V)] to arsenite [As(III)]. The sequence is that of Arsenate reductase from Shouchella clausii (strain KSM-K16) (Alkalihalobacillus clausii).